The sequence spans 81 residues: RNA-binding protein Hfq (81 aa).

The region spanning 9 to 68 (DPYLNILRKERVPVSIFLVNGIKLQGQIESFDQFVILLKNTVSQMVYKHAISTVVPSRTI) is the Sm domain.

This sequence belongs to the Hfq family. Homohexamer.

Its function is as follows. RNA chaperone that binds small regulatory RNA (sRNAs) and mRNAs to facilitate mRNA translational regulation in response to envelope stress, environmental stress and changes in metabolite concentrations. Also binds with high specificity to tRNAs. This is RNA-binding protein Hfq from Marinomonas sp. (strain MWYL1).